A 77-amino-acid chain; its full sequence is U8-lycotoxin-Ls1g (77 aa).

The first 20 residues, 1–20, serve as a signal peptide directing secretion; sequence MKLIIFTGLVLFAIVSLIEV. Positions 21-26 are excised as a propeptide; sequence QADNER.

Belongs to the neurotoxin 19 (CSTX) family. 08 (U8-Lctx) subfamily. Contains 4 disulfide bonds. As to expression, expressed by the venom gland.

The protein localises to the secreted. The protein is U8-lycotoxin-Ls1g of Lycosa singoriensis (Wolf spider).